Here is a 164-residue protein sequence, read N- to C-terminus: Probable ubiquitin-conjugating enzyme E2 7 (164 aa).

Residues 3–163 form the UBC core domain; that stretch reads QSSLLLKKQL…VAQCVRRSQE (161 aa). The Glycyl thioester intermediate role is filled by Cys88.

It belongs to the ubiquitin-conjugating enzyme family.

It carries out the reaction S-ubiquitinyl-[E1 ubiquitin-activating enzyme]-L-cysteine + [E2 ubiquitin-conjugating enzyme]-L-cysteine = [E1 ubiquitin-activating enzyme]-L-cysteine + S-ubiquitinyl-[E2 ubiquitin-conjugating enzyme]-L-cysteine.. Its pathway is protein modification; protein ubiquitination. Its function is as follows. Catalyzes the covalent attachment of ubiquitin to other proteins. This chain is Probable ubiquitin-conjugating enzyme E2 7 (ubc-7), found in Caenorhabditis elegans.